The primary structure comprises 810 residues: Phospholipase D alpha 1 (810 aa).

Positions 1–126 (MAQHLLHGTL…INGEEVDQWV (126 aa)) constitute a C2 domain. Asp-187 lines the Ca(2+) pocket. Residues 327 to 366 (TMFTHHQKIVVVDSEMPSRGGSEMRRIVSFVGGIDLCDGR) form the PLD phosphodiesterase 1 domain. Catalysis depends on residues His-332, Lys-334, and Asp-339. His-332 provides a ligand contact to a 1,2-diacyl-sn-glycero-3-phosphate. 2 residues coordinate Ca(2+): His-372 and His-406. 2 residues coordinate a 1,2-diacyl-sn-glycero-3-phosphate: Gln-522 and His-661. Residues 656–683 (FMIYVHTKMMIVDDEYIIIGSANINQRS) enclose the PLD phosphodiesterase 2 domain. Catalysis depends on residues His-661, Lys-663, and Asp-668. Position 722 (Glu-722) interacts with Ca(2+).

This sequence belongs to the phospholipase D family. C2-PLD subfamily. In terms of assembly, interacts with GPA1. This binding inhibits PLDALPHA1 activity and is relieved by GTP. The cofactor is Ca(2+). In terms of tissue distribution, highly expressed in roots, stems and flowers, moderately in leaves, seedlings and siliques. Not detected in seeds.

Its subcellular location is the cytoplasm. The protein resides in the cell membrane. It localises to the mitochondrion membrane. The protein localises to the microsome membrane. It is found in the vacuole. Its subcellular location is the cytoplasmic vesicle. The protein resides in the clathrin-coated vesicle. It carries out the reaction a 1,2-diacyl-sn-glycero-3-phosphocholine + H2O = a 1,2-diacyl-sn-glycero-3-phosphate + choline + H(+). With respect to regulation, not inhibited by neomycin. Its function is as follows. Hydrolyzes glycerol-phospholipids at the terminal phosphodiesteric bond to generate phosphatidic acids (PA). Plays an important role in various cellular processes, including phytohormone action and response to stress, characterized by acidification of the cell. Involved in wound induction of jasmonic acid. May be involved in membrane lipid remodeling. Probably involved in freezing tolerance by modulating the cold-responsive genes and accumulation of osmolytes. Can use phosphatidylcholine (PC), phosphatidylethanolamine (PE) and phosphatidylglycerol (PG) as substrates, both in presence or in absence of PIP2. Its main substrate is phosphatidylcholine. Stimulates the intrinsic GTPase activity of GPA1 upon binding. Mediates the abscisic acid effects on stomata through interaction with GPA1 and the production of phosphatidic acid that bind to ABI1. Involved in seed aging and deterioration. Involved in microtubule stabilization and salt tolerance. Involved in abscisic acid-induced stomatal closure. The sequence is that of Phospholipase D alpha 1 from Arabidopsis thaliana (Mouse-ear cress).